Here is a 151-residue protein sequence, read N- to C-terminus: MGRMHAPGKGLSQSALPYRRSVPTWLKLTSDDVKEQIYKLAKKGLTPSQIGVILRDSHGVAQVRFVTGNKILRILKSKGLAPDLPEDLYHLIKKAVAVRKHLERNRKDKDAKFRLILIESRIHRLARYYKTRRVLPPNWKYESSTASALVA.

The protein belongs to the universal ribosomal protein uS15 family. In terms of assembly, component of the small ribosomal subunit.

It localises to the cytoplasm. Its function is as follows. Component of the small ribosomal subunit. The ribosome is a large ribonucleoprotein complex responsible for the synthesis of proteins in the cell. This is Small ribosomal subunit protein uS15 (rps13) from Xenopus laevis (African clawed frog).